Here is a 316-residue protein sequence, read N- to C-terminus: Pantothenate kinase (316 aa).

An ATP-binding site is contributed by 95–102; the sequence is GSVAVGKS.

The protein belongs to the prokaryotic pantothenate kinase family.

Its subcellular location is the cytoplasm. It carries out the reaction (R)-pantothenate + ATP = (R)-4'-phosphopantothenate + ADP + H(+). Its pathway is cofactor biosynthesis; coenzyme A biosynthesis; CoA from (R)-pantothenate: step 1/5. The polypeptide is Pantothenate kinase (Erwinia tasmaniensis (strain DSM 17950 / CFBP 7177 / CIP 109463 / NCPPB 4357 / Et1/99)).